We begin with the raw amino-acid sequence, 443 residues long: Threonine/serine transporter TdcC (443 aa).

11 consecutive transmembrane segments (helical) span residues 24 to 44 (WVLGLFGTAIGAGVLFFPISA), 45 to 65 (GIGGLLPIIFMLILAFPIAFF), 95 to 115 (VGGVVITFLYFFAICPLLWIY), 140 to 160 (VVALAILLVMAFFIYFGKDLM), 163 to 183 (VMGYLVFPFITCLVLISLSLI), 207 to 227 (ILVTVWLGIAIMVFSFNFSPI), 259 to 279 (ASVLMVVVVMFFAFSCLFTLS), 319 to 339 (ASIIALVAIFKSFFGHYLGTL), 363 to 383 (LNMISMVIIMGSTWVIAYINP), 385 to 405 (ILDLIGAMGAPIIAALLCLLP), and 423 to 443 (SNYFVTIIGLLTILNIVYQLM).

The protein belongs to the amino acid/polyamine transporter 2 family. SdaC/TdcC subfamily.

The protein localises to the cell inner membrane. It carries out the reaction L-threonine(in) + H(+)(in) = L-threonine(out) + H(+)(out). The catalysed reaction is L-serine(in) + H(+)(in) = L-serine(out) + H(+)(out). Involved in the import of threonine and serine into the cell, with the concomitant import of a proton (symport system). The polypeptide is Threonine/serine transporter TdcC (Edwardsiella tarda).